We begin with the raw amino-acid sequence, 334 residues long: Holliday junction branch migration complex subunit RuvB (334 aa).

The segment at 1 to 179 is large ATPase domain (RuvB-L); that stretch reads MTHKISVLHQ…FAFTGRVDYY (179 aa). Residues leucine 18, arginine 19, glycine 60, lysine 63, threonine 64, serine 65, 126-128, arginine 169, tyrosine 179, and arginine 216 each bind ATP; that span reads EDF. Threonine 64 is a Mg(2+) binding site. Residues 180 to 250 are small ATPAse domain (RuvB-S); it reads TDEDLVSILS…VAEKALAMLL (71 aa). The head domain (RuvB-H) stretch occupies residues 253–334; sequence NLGLNEIDIK…RNPKDRWGEE (82 aa). 2 residues coordinate DNA: arginine 308 and arginine 313.

It belongs to the RuvB family. In terms of assembly, homohexamer. Forms an RuvA(8)-RuvB(12)-Holliday junction (HJ) complex. HJ DNA is sandwiched between 2 RuvA tetramers; dsDNA enters through RuvA and exits via RuvB. An RuvB hexamer assembles on each DNA strand where it exits the tetramer. Each RuvB hexamer is contacted by two RuvA subunits (via domain III) on 2 adjacent RuvB subunits; this complex drives branch migration. In the full resolvosome a probable DNA-RuvA(4)-RuvB(12)-RuvC(2) complex forms which resolves the HJ.

Its subcellular location is the cytoplasm. It carries out the reaction ATP + H2O = ADP + phosphate + H(+). Functionally, the RuvA-RuvB-RuvC complex processes Holliday junction (HJ) DNA during genetic recombination and DNA repair, while the RuvA-RuvB complex plays an important role in the rescue of blocked DNA replication forks via replication fork reversal (RFR). RuvA specifically binds to HJ cruciform DNA, conferring on it an open structure. The RuvB hexamer acts as an ATP-dependent pump, pulling dsDNA into and through the RuvAB complex. RuvB forms 2 homohexamers on either side of HJ DNA bound by 1 or 2 RuvA tetramers; 4 subunits per hexamer contact DNA at a time. Coordinated motions by a converter formed by DNA-disengaged RuvB subunits stimulates ATP hydrolysis and nucleotide exchange. Immobilization of the converter enables RuvB to convert the ATP-contained energy into a lever motion, pulling 2 nucleotides of DNA out of the RuvA tetramer per ATP hydrolyzed, thus driving DNA branch migration. The RuvB motors rotate together with the DNA substrate, which together with the progressing nucleotide cycle form the mechanistic basis for DNA recombination by continuous HJ branch migration. Branch migration allows RuvC to scan DNA until it finds its consensus sequence, where it cleaves and resolves cruciform DNA. In Chlamydia trachomatis serovar A (strain ATCC VR-571B / DSM 19440 / HAR-13), this protein is Holliday junction branch migration complex subunit RuvB.